Consider the following 481-residue polypeptide: 1-acylglycerol-3-phosphate O-acyltransferase PNPLA3 (481 aa).

Over 1-41 (MYDAERGWSLSFAGCGFLGFYHVGATRCLSEHAPHLLRDAR) the chain is Cytoplasmic. One can recognise a PNPLA domain in the interval 10-179 (LSFAGCGFLG…SDNVPFIDAK (170 aa)). The GXGXXG signature appears at 14-19 (GCGFLG). A helical; Signal-anchor for type II membrane protein membrane pass occupies residues 42–62 (MLFGASAGALHCVGVLSGIPL). A GXSXG motif is present at residues 45–49 (GASAG). Residue Ser47 is the Nucleophile of the active site. The Lumenal portion of the chain corresponds to 63 to 481 (EQTLQVLSDL…FPSFSLEKSL (419 aa)). The N-linked (GlcNAc...) asparagine glycan is linked to Asn89. The active-site Proton acceptor is the Asp166. A DGA/G motif is present at residues 166-168 (DGG). The N-linked (GlcNAc...) asparagine glycan is linked to Asn280.

It is found in the membrane. The protein resides in the lipid droplet. The enzyme catalyses a 1-acyl-sn-glycero-3-phosphate + an acyl-CoA = a 1,2-diacyl-sn-glycero-3-phosphate + CoA. The catalysed reaction is a triacylglycerol + H2O = a diacylglycerol + a fatty acid + H(+). It carries out the reaction a 1-acylglycerol + a 1,3-diacylglycerol = a triacylglycerol + glycerol. It catalyses the reaction a 1-acylglycerol + a 1,2-diacylglycerol = a triacylglycerol + glycerol. The enzyme catalyses 2 a 1-acylglycerol = a 1,2-diacylglycerol + glycerol. The catalysed reaction is 1-(9Z-octadecenoyl)-sn-glycero-3-phosphate + (9Z)-octadecenoyl-CoA = 1,2-di-(9Z-octadecenoyl)-sn-glycero-3-phosphate + CoA. It carries out the reaction 1-(9Z-octadecenoyl)-sn-glycero-3-phosphate + hexadecanoyl-CoA = 1-(9Z)-octadecenoyl-2-hexadecanoyl-sn-glycero-3-phosphate + CoA. It catalyses the reaction 1-(9Z-octadecenoyl)-sn-glycero-3-phosphate + (9Z,12Z)-octadecadienoyl-CoA = 1-(9Z)-octadecenoyl-2-(9Z,12Z)-octadecadienoyl-sn-glycero-3-phosphate + CoA. The enzyme catalyses 1-(9Z-octadecenoyl)-sn-glycero-3-phosphate + (5Z,8Z,11Z,14Z)-eicosatetraenoyl-CoA = 1-(9Z)-octadecenoyl-2-(5Z,8Z,11Z,14Z)-eicosatetraenoyl-sn-glycero-3-phosphate + CoA. The catalysed reaction is 2 1-(9Z-octadecenoyl)-glycerol = 1,2-di-(9Z-octadecenoyl)-glycerol + glycerol. It carries out the reaction 1-(9Z-octadecenoyl)-glycerol + 1,2-di-(9Z-octadecenoyl)-glycerol = 1,2,3-tri-(9Z-octadecenoyl)-glycerol + glycerol. It catalyses the reaction 1-(9Z-octadecenoyl)-glycerol + 1,3-di-(9Z-octadecenoyl)-glycerol = 1,2,3-tri-(9Z-octadecenoyl)-glycerol + glycerol. The enzyme catalyses 1,2,3-tri-(9Z-octadecenoyl)-glycerol + H2O = 1,3-di-(9Z-octadecenoyl)-glycerol + (9Z)-octadecenoate + H(+). The catalysed reaction is a 1,2-diacyl-sn-glycero-3-phosphocholine + H2O = a 1-acyl-sn-glycero-3-phosphocholine + a fatty acid + H(+). Its pathway is phospholipid metabolism. It participates in glycerolipid metabolism. Its activity is regulated as follows. The triglyceride lipase activity is inhibited by BEL ((E)-6-(bromomethylene)-3-(1-naphthalenyl)-2H-tetrahydropyran-2-one), a suicide substrate inhibitor. Specifically catalyzes coenzyme A (CoA)-dependent acylation of 1-acyl-sn-glycerol 3-phosphate (2-lysophosphatidic acid/LPA) to generate phosphatidic acid (PA), an important metabolic intermediate and precursor for both triglycerides and glycerophospholipids. Does not esterify other lysophospholipids. Acyl donors are long chain (at least C16) fatty acyl-CoAs: arachidonoyl-CoA, linoleoyl-CoA, oleoyl-CoA and at a lesser extent palmitoyl-CoA. Additionally possesses low triacylglycerol lipase and CoA-independent acylglycerol transacylase activities and thus may play a role in acyl-chain remodeling of triglycerides. In vitro may express hydrolytic activity against glycerolipids triacylglycerol, diacylglycerol and monoacylglycerol, with a strong preference for oleic acid as the acyl moiety. However, the triacylglycerol hydrolase activity is controversial and may be very low. Possesses phospholipase A2 activity. The sequence is that of 1-acylglycerol-3-phosphate O-acyltransferase PNPLA3 from Homo sapiens (Human).